A 142-amino-acid polypeptide reads, in one-letter code: Galactose-6-phosphate isomerase subunit LacA 2 (142 aa).

The protein belongs to the LacAB/RpiB family. In terms of assembly, heteromultimeric protein consisting of LacA and LacB.

It catalyses the reaction aldehydo-D-galactose 6-phosphate = keto-D-tagatose 6-phosphate. The protein operates within carbohydrate metabolism; D-galactose 6-phosphate degradation; D-tagatose 6-phosphate from D-galactose 6-phosphate: step 1/1. The sequence is that of Galactose-6-phosphate isomerase subunit LacA 2 from Streptococcus pyogenes serotype M3 (strain ATCC BAA-595 / MGAS315).